The following is a 172-amino-acid chain: Ribosome maturation factor RimP (172 aa).

Belongs to the RimP family.

It localises to the cytoplasm. Its function is as follows. Required for maturation of 30S ribosomal subunits. This is Ribosome maturation factor RimP from Chlorobium phaeovibrioides (strain DSM 265 / 1930) (Prosthecochloris vibrioformis (strain DSM 265)).